The primary structure comprises 286 residues: Cytosolic 5'-nucleotidase 3 (286 aa).

The active-site Nucleophile is D38. Residues D38 and D40 each coordinate Mg(2+). D40 serves as the catalytic Proton donor. Residues E85, S106, 153–154, and K202 contribute to the substrate site; that span reads SA. D227 provides a ligand contact to Mg(2+).

Belongs to the pyrimidine 5'-nucleotidase family.

The protein resides in the cytoplasm. It carries out the reaction a ribonucleoside 5'-phosphate + H2O = a ribonucleoside + phosphate. Functionally, can act both as nucleotidase and as phosphotransferase. The polypeptide is Cytosolic 5'-nucleotidase 3 (nt5c3) (Danio rerio (Zebrafish)).